Consider the following 484-residue polypeptide: tRNA sulfurtransferase (484 aa).

In terms of domain architecture, THUMP spans 63–167; that stretch reads REMIERLTCT…LDRLFVIHRQ (105 aa). ATP is bound by residues 185–186, K267, G289, and Q298; that span reads LM. A disulfide bond links C346 and C457. The Rhodanese domain maps to 405-483; the sequence is VLPGQIVIDI…GHTNVRVYRP (79 aa). C457 (cysteine persulfide intermediate) is an active-site residue.

This sequence belongs to the ThiI family.

It is found in the cytoplasm. It carries out the reaction [ThiI sulfur-carrier protein]-S-sulfanyl-L-cysteine + a uridine in tRNA + 2 reduced [2Fe-2S]-[ferredoxin] + ATP + H(+) = [ThiI sulfur-carrier protein]-L-cysteine + a 4-thiouridine in tRNA + 2 oxidized [2Fe-2S]-[ferredoxin] + AMP + diphosphate. The enzyme catalyses [ThiS sulfur-carrier protein]-C-terminal Gly-Gly-AMP + S-sulfanyl-L-cysteinyl-[cysteine desulfurase] + AH2 = [ThiS sulfur-carrier protein]-C-terminal-Gly-aminoethanethioate + L-cysteinyl-[cysteine desulfurase] + A + AMP + 2 H(+). Its pathway is cofactor biosynthesis; thiamine diphosphate biosynthesis. Its function is as follows. Catalyzes the ATP-dependent transfer of a sulfur to tRNA to produce 4-thiouridine in position 8 of tRNAs, which functions as a near-UV photosensor. Also catalyzes the transfer of sulfur to the sulfur carrier protein ThiS, forming ThiS-thiocarboxylate. This is a step in the synthesis of thiazole, in the thiamine biosynthesis pathway. The sulfur is donated as persulfide by IscS. In Pseudomonas aeruginosa (strain UCBPP-PA14), this protein is tRNA sulfurtransferase.